The sequence spans 480 residues: Probable GH family 25 lysozyme 3 (480 aa).

A signal peptide spans Met-1 to Ala-20. A Ch-type lysozyme domain is found at Gly-21 to Ser-231. Catalysis depends on residues Asp-25, Asp-114, and Glu-116. Positions Ser-219–Gly-472 are enriched in low complexity. The disordered stretch occupies residues Ser-219–Phe-480. 5 N-linked (GlcNAc...) asparagine glycosylation sites follow: Asn-423, Asn-428, Asn-437, Asn-446, and Asn-468.

It belongs to the glycosyl hydrolase 25 family.

The protein localises to the secreted. The enzyme catalyses Hydrolysis of (1-&gt;4)-beta-linkages between N-acetylmuramic acid and N-acetyl-D-glucosamine residues in a peptidoglycan and between N-acetyl-D-glucosamine residues in chitodextrins.. In Dictyostelium discoideum (Social amoeba), this protein is Probable GH family 25 lysozyme 3.